Reading from the N-terminus, the 392-residue chain is uncharacterized protein (392 aa).

Belongs to the ROK (NagC/XylR) family.

This is an uncharacterized protein from Sinorhizobium fredii (strain NBRC 101917 / NGR234).